A 443-amino-acid polypeptide reads, in one-letter code: ATP-dependent protease ATPase subunit HslU (443 aa).

ATP-binding positions include I18, 60-65 (GVGKTE), D256, E321, and R393.

It belongs to the ClpX chaperone family. HslU subfamily. In terms of assembly, a double ring-shaped homohexamer of HslV is capped on each side by a ring-shaped HslU homohexamer. The assembly of the HslU/HslV complex is dependent on binding of ATP.

It is found in the cytoplasm. Its function is as follows. ATPase subunit of a proteasome-like degradation complex; this subunit has chaperone activity. The binding of ATP and its subsequent hydrolysis by HslU are essential for unfolding of protein substrates subsequently hydrolyzed by HslV. HslU recognizes the N-terminal part of its protein substrates and unfolds these before they are guided to HslV for hydrolysis. This is ATP-dependent protease ATPase subunit HslU from Salmonella arizonae (strain ATCC BAA-731 / CDC346-86 / RSK2980).